Reading from the N-terminus, the 377-residue chain is Putative F-box only protein 10 (377 aa).

The F-box domain maps to 1-46 (MVSVNLPWELVEEILYRVPPQSLARFRTVCKQWNSLFDDNKFVNDH).

This Arabidopsis thaliana (Mouse-ear cress) protein is Putative F-box only protein 10 (FBX10).